The primary structure comprises 198 residues: Na(+)-translocating NADH-quinone reductase subunit E (198 aa).

6 helical membrane passes run S11–V31, F39–V59, F77–V97, G110–V130, I140–I160, and L176–V196.

The protein belongs to the NqrDE/RnfAE family. As to quaternary structure, composed of six subunits; NqrA, NqrB, NqrC, NqrD, NqrE and NqrF.

The protein localises to the cell inner membrane. It carries out the reaction a ubiquinone + n Na(+)(in) + NADH + H(+) = a ubiquinol + n Na(+)(out) + NAD(+). NQR complex catalyzes the reduction of ubiquinone-1 to ubiquinol by two successive reactions, coupled with the transport of Na(+) ions from the cytoplasm to the periplasm. NqrA to NqrE are probably involved in the second step, the conversion of ubisemiquinone to ubiquinol. The chain is Na(+)-translocating NADH-quinone reductase subunit E from Vibrio campbellii (strain ATCC BAA-1116).